We begin with the raw amino-acid sequence, 265 residues long: Type 1 encapsulin shell protein (265 aa).

This sequence belongs to the encapsulin family. Family 1 subfamily. As to quaternary structure, found in a complex with DyP, suggesting it is the native cargo protein. Monomers form pentamers, which assemble to form hollow shells composed of 60 subunits with several openings.

It localises to the encapsulin nanocompartment. Its subcellular location is the cell membrane. Shell component of a type 1 encapsulin nanocompartment. Assembles into proteinaceous shells 23-24 nm in diameter with 2-2.5 nm thick walls. Cargo protein DyP is targeted to the interior via its C-terminal extension; probably only 1 DyP hexamer is incorporated into each shell. Probably involved in protection against oxidative damage. This chain is Type 1 encapsulin shell protein, found in Mycolicibacterium paratuberculosis (strain ATCC BAA-968 / K-10) (Mycobacterium paratuberculosis).